Here is a 387-residue protein sequence, read N- to C-terminus: Chaperone protein DnaJ (387 aa).

In terms of domain architecture, J spans 6–71 (DYYEILGVPR…EKRRKYDQFG (66 aa)). Residues 146-228 (GCEKEIPIYR…CGGTGTVRRQ (83 aa)) form a CR-type zinc finger. The Zn(2+) site is built by Cys-159, Cys-162, Cys-176, Cys-179, Cys-202, Cys-205, Cys-216, and Cys-219. CXXCXGXG motif repeat units lie at residues 159–166 (CSVCGGSG), 176–183 (CQKCGGTG), 202–209 (CDACGGVG), and 216–223 (CRECGGTG).

Belongs to the DnaJ family. Homodimer. Zn(2+) serves as cofactor.

Its subcellular location is the cytoplasm. In terms of biological role, participates actively in the response to hyperosmotic and heat shock by preventing the aggregation of stress-denatured proteins and by disaggregating proteins, also in an autonomous, DnaK-independent fashion. Unfolded proteins bind initially to DnaJ; upon interaction with the DnaJ-bound protein, DnaK hydrolyzes its bound ATP, resulting in the formation of a stable complex. GrpE releases ADP from DnaK; ATP binding to DnaK triggers the release of the substrate protein, thus completing the reaction cycle. Several rounds of ATP-dependent interactions between DnaJ, DnaK and GrpE are required for fully efficient folding. Also involved, together with DnaK and GrpE, in the DNA replication of plasmids through activation of initiation proteins. The protein is Chaperone protein DnaJ of Caldicellulosiruptor saccharolyticus (strain ATCC 43494 / DSM 8903 / Tp8T 6331).